Here is a 47-residue protein sequence, read N- to C-terminus: uncharacterized protein (47 aa).

Residues 28 to 45 form a helical membrane-spanning segment; it reads VMIWGCLPYFLYVLIRMF.

It is found in the cell membrane. This is an uncharacterized protein from Bacillus subtilis (strain 168).